An 882-amino-acid chain; its full sequence is DNA mismatch repair protein MutS (882 aa).

627–634 (GPNMAGKS) provides a ligand contact to ATP.

Belongs to the DNA mismatch repair MutS family.

This protein is involved in the repair of mismatches in DNA. It is possible that it carries out the mismatch recognition step. This protein has a weak ATPase activity. The polypeptide is DNA mismatch repair protein MutS (Anaeromyxobacter dehalogenans (strain 2CP-C)).